We begin with the raw amino-acid sequence, 178 residues long: Cytochrome b6-f complex iron-sulfur subunit (178 aa).

The chain crosses the membrane as a helical span at residues 20 to 42 (LLTFGSVTGVALGALYPVVNYFI). In terms of domain architecture, Rieske spans 71 to 161 (THPAGDRSLV…VSVENDNVFV (91 aa)). [2Fe-2S] cluster contacts are provided by Cys107, His109, Cys125, and His128. Cysteines 112 and 127 form a disulfide.

Belongs to the Rieske iron-sulfur protein family. The 4 large subunits of the cytochrome b6-f complex are cytochrome b6, subunit IV (17 kDa polypeptide, PetD), cytochrome f and the Rieske protein, while the 4 small subunits are PetG, PetL, PetM and PetN. The complex functions as a dimer. The cofactor is [2Fe-2S] cluster.

The protein resides in the cellular thylakoid membrane. It catalyses the reaction 2 oxidized [plastocyanin] + a plastoquinol + 2 H(+)(in) = 2 reduced [plastocyanin] + a plastoquinone + 4 H(+)(out). Component of the cytochrome b6-f complex, which mediates electron transfer between photosystem II (PSII) and photosystem I (PSI), cyclic electron flow around PSI, and state transitions. This Synechococcus sp. (strain WH7803) protein is Cytochrome b6-f complex iron-sulfur subunit.